The primary structure comprises 341 residues: Tryptophan--tRNA ligase (341 aa).

ATP contacts are provided by residues 11–13 and 19–20; these read RPT and GH. Residues 12–20 carry the 'HIGH' region motif; it reads PTGKLHIGH. D140 contacts L-tryptophan. ATP contacts are provided by residues 152-154, L194, and 202-206; these read GND and KMSKS. The short motif at 202–206 is the 'KMSKS' region element; it reads KMSKS.

This sequence belongs to the class-I aminoacyl-tRNA synthetase family. Homodimer.

The protein resides in the cytoplasm. The catalysed reaction is tRNA(Trp) + L-tryptophan + ATP = L-tryptophyl-tRNA(Trp) + AMP + diphosphate + H(+). Functionally, catalyzes the attachment of tryptophan to tRNA(Trp). The protein is Tryptophan--tRNA ligase of Lactococcus lactis subsp. lactis (strain IL1403) (Streptococcus lactis).